Reading from the N-terminus, the 98-residue chain is MKYVALAFVLSLVILQISAQVGAAYIPGMGLGSVGRTGAVAGASAGVGNQGRGAGILRLLSIIMELVKNNQQAQPKQDTFGAQLQSLLKKKMILEMIN.

A signal peptide spans 1–23 (MKYVALAFVLSLVILQISAQVGA).

In terms of tissue distribution, nacreous layer of shell (at protein level). Expressed primarily in the mantle with highest level in the mantle pallium and lower level in the mantle edge.

It localises to the secreted. This is an uncharacterized protein from Pinctada maxima (Silver-lipped pearl oyster).